Here is a 529-residue protein sequence, read N- to C-terminus: Nucleolar protein 58 (529 aa).

The residue at position 34 (Thr-34) is a Phosphothreonine. Ser-109 is modified (phosphoserine). The interval 155 to 400 (ADKVDTMIVQ…LEARLRTLED (246 aa)) is sufficient for interaction with NOPCHAP1. Residue Lys-157 forms a Glycyl lysine isopeptide (Lys-Gly) (interchain with G-Cter in SUMO2) linkage. Residues 282 to 400 (IAPNVTVMVG…LEARLRTLED (119 aa)) form the Nop domain. Ser-304 and Ser-351 each carry phosphoserine. Residues Lys-353, Lys-411, Lys-415, Lys-422, Lys-426, Lys-441, Lys-444, and Lys-465 each participate in a glycyl lysine isopeptide (Lys-Gly) (interchain with G-Cter in SUMO2) cross-link. Residues 409 to 529 (TGKALAKTEK…KKKKKRENED (121 aa)) are disordered. Over residues 414 to 427 (AKTEKYEHKSEVKT) the composition is skewed to basic and acidic residues. Lys-467 participates in a covalent cross-link: Glycyl lysine isopeptide (Lys-Gly) (interchain with G-Cter in SUMO); alternate. Lys-467 participates in a covalent cross-link: Glycyl lysine isopeptide (Lys-Gly) (interchain with G-Cter in SUMO1); alternate. Lys-467 is covalently cross-linked (Glycyl lysine isopeptide (Lys-Gly) (interchain with G-Cter in SUMO2); alternate). Acidic residues predominate over residues 469 to 481 (EEEEEEKVAEEEE). A Phosphoserine modification is found at Ser-483. Lys-485 is covalently cross-linked (Glycyl lysine isopeptide (Lys-Gly) (interchain with G-Cter in SUMO2)). The span at 485–495 (KKKKKRGKKKH) shows a compositional bias: basic residues. Lys-497 participates in a covalent cross-link: Glycyl lysine isopeptide (Lys-Gly) (interchain with G-Cter in SUMO); alternate. A Glycyl lysine isopeptide (Lys-Gly) (interchain with G-Cter in SUMO2); alternate cross-link involves residue Lys-497. Phosphoserine occurs at positions 502 and 514. Positions 517-529 (KKKKKKKKRENED) are enriched in basic residues.

Belongs to the NOP5/NOP56 family. In terms of assembly, core component of box C/D small nucleolar ribonucleoprotein (snoRNP) particles; the core proteins SNU13, NOP56, NOP58 and FBL or FBLL1 assemble stepwise onto the snoRNA. Interacts with NOLC1/Nopp140. Interacts with NOPCHAP1, NUFIP1, RUVBL1 and RUVBL2; NOPCHAP1 bridges the association of NOP58 with RUVBL1:RUVBL2 and NUFIP1. Interacts with PIH1D1. Part of the small subunit (SSU) processome, composed of more than 70 proteins and the RNA chaperone small nucleolar RNA (snoRNA) U3. In terms of processing, sumoylation is essential for high-affinity binding to snoRNAs. In terms of tissue distribution, ubiquitous.

Its subcellular location is the nucleus. It is found in the nucleolus. It localises to the nucleoplasm. In terms of biological role, required for the biogenesis of box C/D snoRNAs such as U3, U8 and U14 snoRNAs. Part of the small subunit (SSU) processome, first precursor of the small eukaryotic ribosomal subunit. During the assembly of the SSU processome in the nucleolus, many ribosome biogenesis factors, an RNA chaperone and ribosomal proteins associate with the nascent pre-rRNA and work in concert to generate RNA folding, modifications, rearrangements and cleavage as well as targeted degradation of pre-ribosomal RNA by the RNA exosome. Core component of box C/D small nucleolar ribonucleoprotein (snoRNP) complexes that function in methylation of multiple sites on ribosomal RNAs (rRNAs) and messenger RNAs (mRNAs). The polypeptide is Nucleolar protein 58 (Homo sapiens (Human)).